A 111-amino-acid polypeptide reads, in one-letter code: Entry-fusion complex protein OPG086 (111 aa).

A helical; Signal-anchor transmembrane segment spans residues 1 to 21; that stretch reads MASLLYLILFLLFVCISYYFT. At 22–111 the chain is on the virion surface side; the sequence is YYPTNKLQAA…TLLPILLLSK (90 aa).

The protein belongs to the orthopoxvirus OPG086 family. As to quaternary structure, interacts with OPG099/L5. Component of the entry fusion complex (EFC) composed of OPG053, OPG076, OPG086, OPG094, OPG095, OPG099, OPG107, OPG143, OPG104, OPG147 and OPG155. Except for OPG095 and OPG053, each of the EFC proteins is required for assembly or stability of the complex. Post-translationally, unglycosylated because produced in viral factories instead of the classic ER -Golgi route.

It is found in the virion membrane. Component of the entry fusion complex (EFC), which consists of 11 proteins. During cell infection, this complex mediates entry of the virion core into the host cytoplasm by a two-step mechanism consisting of lipid mixing of the viral and cellular membranes and subsequent pore formation. This Vaccinia virus (strain Copenhagen) (VACV) protein is Entry-fusion complex protein OPG086 (OPG086).